A 311-amino-acid chain; its full sequence is AT-hook motif nuclear-localized protein 27 (311 aa).

The disordered stretch occupies residues 40 to 105 (HHHQHQQHQQ…KNKAKPPIIV (66 aa)). The span at 55–75 (DDSRESDHSNKDHHQQGRPDS) shows a compositional bias: basic and acidic residues. Residues 86-98 (KRPRGRPPGSKNK) constitute a DNA-binding region (a.T hook). The 149-residue stretch at 110–258 (PNALRSHVLE…EEGGGGGGGG (149 aa)) folds into the PPC domain. Residues 178–183 (GRFEIL) are required for the binding to non-AHL interactors. Residues 246 to 311 (EEEEEGGGGG…GAGTPSRPPF (66 aa)) form a disordered region. Gly residues predominate over residues 252–262 (GGGGGGGGGGP). A compositionally biased stretch (low complexity) spans 263 to 277 (PQMQQAPSASPPSGV). A compositionally biased stretch (gly residues) spans 278–292 (TGQGQLGGNVGGYGF).

Homodimer. Interacts with AHL12, AHL25, AHL29, TCP4, TCP13, EF114, ATAF2/NAC081, histone H2B.1, histone H3.3 and histone H4. As to expression, expressed in the hypocotyl and the vascular tissue of seedling.

It localises to the nucleus. Functionally, transcription factor that specifically binds AT-rich DNA sequences related to the nuclear matrix attachment regions (MARs). Negatively regulates plant innate immunity (PTI) to pathogens through the down-regulation of the PAMP-triggered FRK1 expression. Acts redundantly with AHL18, AHL22 and AHL29 in the regulation of flowering and regulation of the hypocotyl elongation. Acts as a chromatin remodeling factor that negatively regulates the leaf senescence. Acts redundantly with AHL29/SOB3 to modulate hypocotyl growth inhibition in response to light. The polypeptide is AT-hook motif nuclear-localized protein 27 (Arabidopsis thaliana (Mouse-ear cress)).